The primary structure comprises 446 residues: Phosphoglucosamine mutase (446 aa).

The active-site Phosphoserine intermediate is Ser99. Mg(2+) contacts are provided by Ser99, Asp242, Asp244, and Asp246. Position 99 is a phosphoserine (Ser99).

It belongs to the phosphohexose mutase family. The cofactor is Mg(2+). Post-translationally, activated by phosphorylation.

It catalyses the reaction alpha-D-glucosamine 1-phosphate = D-glucosamine 6-phosphate. In terms of biological role, catalyzes the conversion of glucosamine-6-phosphate to glucosamine-1-phosphate. The polypeptide is Phosphoglucosamine mutase (Campylobacter curvus (strain 525.92)).